A 138-amino-acid polypeptide reads, in one-letter code: Basic phospholipase A2 PL-Y (138 aa).

The first 16 residues, methionine 1–glycine 16, serve as a signal peptide directing secretion. Disulfide bonds link cysteine 42-cysteine 131, cysteine 44-cysteine 60, cysteine 59-cysteine 111, cysteine 65-cysteine 138, cysteine 66-cysteine 104, cysteine 73-cysteine 97, and cysteine 91-cysteine 102. Residues tyrosine 43, glycine 45, and glycine 47 each contribute to the Ca(2+) site. Residue histidine 63 is part of the active site. Aspartate 64 provides a ligand contact to Ca(2+). Aspartate 105 is an active-site residue.

This sequence belongs to the phospholipase A2 family. Group II subfamily. D49 sub-subfamily. Ca(2+) is required as a cofactor. In terms of tissue distribution, expressed by the venom gland.

Its subcellular location is the secreted. The catalysed reaction is a 1,2-diacyl-sn-glycero-3-phosphocholine + H2O = a 1-acyl-sn-glycero-3-phosphocholine + a fatty acid + H(+). Snake venom phospholipase A2 (PLA2) that can cleave arachidonate at the sn-2 position from phospholipides in the micellar state or in bilayer membranes. PLA2 catalyzes the calcium-dependent hydrolysis of the 2-acyl groups in 3-sn-phosphoglycerides. The chain is Basic phospholipase A2 PL-Y from Protobothrops flavoviridis (Habu).